We begin with the raw amino-acid sequence, 97 residues long: Protein 9b (97 aa).

Positions Val-8–Lys-97 constitute a 9b domain.

This sequence belongs to the coronavirus group 2 protein 9b family. In terms of assembly, homodimer.

It is found in the host cytoplasmic vesicle membrane. The protein localises to the host cytoplasm. The chain is Protein 9b from Rhinolophus sinicus (Chinese rufous horseshoe bat).